Consider the following 1616-residue polypeptide: MAYTQTATSSALLETVRGNNTLVNDLAKRRLYDTAVDEFNARDRRPKVNFSKVVSEEQTLIATKAYPEFQITFYNTQNAVHSLAGGLRSLELEYLMMQIPYGSLTYDIGGNFASHLFKGRAYVHCCMPNLDVRDIMRHEGQKDSIELYLSRLERGNKHVPNFQKEAFDRYAEMPNEVVCHDTFQTCRHSQECYTGRVYAIALHSIYDIPADEFGAALLRKNVHVCYAAFHFSENLLLEDSHVNLDEINACFQRDGDRLTFSFASESTLNYSHSYSNILKYVCKTYFPASNREVYMKEFLVTRVNTWFCKFSRIDTFLLYKGVAHKGVDSEQFYKAMEDAWHYKKTLAMCNSERILLEDSSSVNYWFPKMRDMVIVPLFDISLETSKRTRKEVLVSKDFVYTVLNHIRTYQAKALTYSNVLSFVESIRSRVIINGVTARSEWDVDKSLLQSLSMTFFLHTKLAVLKDDLLISKFALGPKTVSQHVWDEISLAFGNAFPSIKERLINRKLIKITENALEIRVPDLYVTFHDRLVSEYKMSVDMPVLDIRKKMEETEEMYNALSELSVLKNSDKFDVDVFSQMCQSLEVDPMTAAKVIVAVMSNESGLTLTFEQPTEANVALALQDSEKASDGALVVTSRDVEEPSIKGSMARGELQLAGLSGDVPESSYTRSEEIESLEQFHMATASSLIHKQMCSIVYTGPLKVQQMKNFIDSLVASLSAAVSNLVKILKDTAAIDLETRQKFGVLDVASKRWLVKPSAKNHAWGVVETHARKYHVALLEHDEFGIITCDNWRRVAVSSESVVYSDMAKLRTLRRLLKDGEPHVSSAKVVLVDGVPGCGKTKEILSRVNFEEDLILVPGRQAAEMIRRRANASGIIVATKDNVRTVDSFLMNYGKGARCQFKRLFIDEGLMLHTGCVNFLVEMSLCDIAYVYGDTQQIPYINRVTGFPYPAHFAKLEVDEVETRRTTLRCPADVTHFLNQRYEGHVMCTSSEKKSVSQEMVSGAASINPVSKPLKGKILTFTQSDKEALLSRGYADVHTVHEVQGETYADVSLVRLTPTPVSIIARDSPHVLVSLSRHTKSLKYYTVVMDPLVSIIRDLERVSSYLLDMYKVDAGTQXQLQVDSVFKNFNLFVAAPKTGDISDMQFYYDKCLPGNSTLLNNYDAVTMKLTDISLNVKDCILDMSKSVAAPKDVKPTLIPMVRTAAEMPRQTGLLENLVAMIKRNFNSPELSGVVDIENTASLVVDKFFDSYLLKEKRKPNKNFSLFSRESLNRWIAKQEQVTIGQLADFDFVDLPAVDQYRHMIKAQPKQKLDLSIQTEYPALQTIVYHSKKINAIFGPLFSELTRQLLDSIDSSRFLFFTRKTPAQIEDFFGDLDSHVPMDVLELDVSKYDKSQNEFHCAVEYEIWRRLGLEDFLAEVWKQGHRKTTLKDYTAGIKTCLWYQRKSGDVTTFIGNTVIIASCLASMLPMEKLIKGAFCGDDSLLYFPKGCEYPDIQQAANLMWNFEAKLFKKQYGYFCGRYVIHHDRGCIVYYDPLKLISKLGAKHIKDWDHLEEFRRSLCDVAESLNNCAYYTQLDDAVGEVHKTAPPGSFVYKSLVKYLSDKVLFRSLFLDGSSC.

Residues 50–458 (FSKVVSEEQT…QSLSMTFFLH (409 aa)) form a methyltransferase region. Residues 72–281 (TFYNTQNAVH…HSYSNILKYV (210 aa)) enclose the Alphavirus-like MT domain. The 163-residue stretch at 801–963 (VVYSDMAKLR…KLEVDEVETR (163 aa)) folds into the (+)RNA virus helicase ATP-binding domain. Residues 830-1085 (LVDGVPGCGK…RHTKSLKYYT (256 aa)) form a helicase region. Residues 836 to 841 (GCGKTK), R868, 967 to 968 (LR), R1076, and 1097 to 1100 (DLER) contribute to the ATP site. A (+)RNA virus helicase C-terminal domain is found at 964 to 1116 (RTTLRCPADV…DMYKVDAGTQ (153 aa)). The RdRp catalytic domain maps to 1380-1493 (MDVLELDVSK…YFPKGCEYPD (114 aa)).

The protein belongs to the ssRNA positive-strand viruses RNA-directed RNA polymerase family. Heterodimer of a large and a small subunit. May interact with the host proteins TOM1 and ARL8. Interacts via an ATP bridge, with host protein Tm-1 (e.g. tomato Tm-1 AC A7M6E7).

It carries out the reaction RNA(n) + a ribonucleoside 5'-triphosphate = RNA(n+1) + diphosphate. The enzyme catalyses ATP + H2O = ADP + phosphate + H(+). With respect to regulation, in resistant plants, is bound by host protein Tm-1 (e.g. tomato Tm-1 AC A7M6E7), thereby inhibiting replication complex activity. Is an RNA-dependent RNA polymerase active in viral RNA replication. In terms of biological role, is a methyltransferase active in RNA capping and an RNA helicase. Methyltransferase displays a cytoplasmic capping enzyme activity. This function is necessary since all viral RNAs are synthesized in the cytoplasm, and host capping enzymes are restricted to the nucleus. Helicase region probably exhibits NTPase and RNA unwinding activities (Potential). It also acts as a suppressor of RNA-mediated gene silencing, also known as post-transcriptional gene silencing (PTGS), a mechanism of plant viral defense that limits the accumulation of viral RNAs. May mediate silencing suppression through either inhibition of HEN1-mediated siRNA or siRNA demethylation. The polypeptide is Replicase large subunit (Tomato mosaic virus (strain L) (ToMV)).